A 449-amino-acid polypeptide reads, in one-letter code: Hyaluronidase (449 aa).

An N-terminal signal peptide occupies residues 1–23; the sequence is MYHLWIKCLAAWIFLKRFNGVHV. Intrachain disulfides connect cysteine 47-cysteine 340 and cysteine 211-cysteine 227. N-linked (GlcNAc...) asparagine glycans are attached at residues asparagine 67, asparagine 103, and asparagine 111. The Proton donor role is filled by glutamate 135. N-linked (GlcNAc...) asparagine glycosylation is present at asparagine 153. N-linked (GlcNAc...) asparagine glycosylation occurs at asparagine 357. Intrachain disulfides connect cysteine 365/cysteine 376, cysteine 370/cysteine 427, and cysteine 429/cysteine 438. An N-linked (GlcNAc...) asparagine glycan is attached at asparagine 401. The region spanning 427–438 is the EGF-like domain; it reads CQCYQGWKGLYC.

The protein belongs to the glycosyl hydrolase 56 family. Monomer. Expressed by the venom gland.

It is found in the secreted. It carries out the reaction Random hydrolysis of (1-&gt;4)-linkages between N-acetyl-beta-D-glucosamine and D-glucuronate residues in hyaluronate.. Its function is as follows. Snake venom endo-hyaluronidase that degrades hyaluronan to smaller oligosaccharide fragments. In venom, it is not toxic by itself, but increases the diffusion of other venom proteins by degrading the extracellular matrix. In addition, it displays antiedematogenic activity. This chain is Hyaluronidase, found in Crotalus adamanteus (Eastern diamondback rattlesnake).